The chain runs to 445 residues: StAR-related lipid transfer protein 3 (445 aa).

Residues 1–51 (MSKLPGELARDLECSLPAVASLGSSLSHSQSLSSHLLPPPEKRRAISDVRR) lie on the Cytoplasmic side of the membrane. Positions 46–217 (ISDVRRTFCL…YSPPESFAGS (172 aa)) constitute an MENTAL domain. Residues 52-72 (TFCLFVTFDLLFISLLWIIEL) traverse the membrane as a helical segment. At 73–94 (NTNTGIRKNLEQEIIQYNFKTS) the chain is on the extracellular side. The helical transmembrane segment at 95–115 (FFDIFVLAFFRFSGLLLGYAV) threads the bilayer. The Cytoplasmic portion of the chain corresponds to 116–120 (LRLQH). A helical membrane pass occupies residues 121 to 141 (WWVIAVTTLVSSAFLIVKVIL). The Extracellular portion of the chain corresponds to 142–148 (SELLSKG). Residues 149–169 (AFGYLLPIVSFVLAWLETWFL) form a helical membrane-spanning segment. Residues 170–445 (DFKVLPQEAE…QRISELGARA (276 aa)) lie on the Cytoplasmic side of the membrane. 2 consecutive short sequence motifs (FFAT) follow at residues 206 to 212 (QFYSPPE) and 207 to 212 (FYSPPE). A phosphoserine mark is found at S209, S217, and S221. The START domain occupies 248–443 (VVDQILAQEE…LRQRISELGA (196 aa)).

It belongs to the STARD3 family. As to quaternary structure, homodimer. Interacts (via the MENTAL domain) with STARD3NL. Interacts (via phosphorylated FFAT motif) with VAPA (via MSP domain). Interacts (via phosphorylated FFAT motif) with VAPB (via MSP domain). Interacts (via phosphorylated FFAT motif) with MOSPD2 (via MSP domain); this interaction allows enrichment of MOSPD2 around endosomes. Phosphorylation at Ser-209 is necessary and sufficient for the direct interaction of the phosphorylated FFAT motif with the MSP domain of MOSPD2, VAPA and VAPB and allows the tethering of two membranes that participates in the formation of ER-endosome contacts. Phosphorylation of the FFAT motif leads to conformation changes. Additional phosphorylations around the core FFAT motif (QFYSPPE) are not essential but strengthen the interaction with MOSPD2, VAPA and VAPB. Phosphorylation at Ser-209 of FFAT motif drives membrane tethering between the endoplasmic reticulum and late endosomes via interaction with VAPA and VAPB that in turn allows the efficient transport of sterol mediated by the START domain. Present in retina. Localizes to all neurons of macular retina and especially cone inner segments and axons (at protein level).

Its subcellular location is the late endosome membrane. The enzyme catalyses cholesterol(in) = cholesterol(out). Functionally, sterol-binding protein that mediates cholesterol transport from the endoplasmic reticulum to endosomes. The sterol transport mechanism is triggered by phosphorylation of FFAT motif that leads to membrane tethering between the endoplasmic reticulum and late endosomes via interaction with VAPA and VAPB. Acts as a lipid transfer protein that redirects sterol to the endosome at the expense of the cell membrane and favors membrane formation inside endosomes. May also mediate cholesterol transport between other membranes, such as mitochondria membrane or cell membrane. However, such results need additional experimental evidences; probably mainly mediates cholesterol transport from the endoplasmic reticulum to endosomes. Does not activate transcriptional cholesterol sensing. Able to bind other lipids, such as lutein, a xanthophyll carotenoids that form the macular pigment of the retina. Able to bind other lipids, such as lutein, a xanthophyll carotenoids that form the macular pigment of the retina. The protein is StAR-related lipid transfer protein 3 of Macaca mulatta (Rhesus macaque).